Reading from the N-terminus, the 408-residue chain is Arginine biosynthesis bifunctional protein ArgJ (408 aa).

Substrate is bound by residues Thr-158, Lys-184, Thr-195, Glu-281, Asn-403, and Thr-408. The active-site Nucleophile is the Thr-195.

It belongs to the ArgJ family. As to quaternary structure, heterotetramer of two alpha and two beta chains.

The protein localises to the cytoplasm. The enzyme catalyses N(2)-acetyl-L-ornithine + L-glutamate = N-acetyl-L-glutamate + L-ornithine. It carries out the reaction L-glutamate + acetyl-CoA = N-acetyl-L-glutamate + CoA + H(+). The protein operates within amino-acid biosynthesis; L-arginine biosynthesis; L-ornithine and N-acetyl-L-glutamate from L-glutamate and N(2)-acetyl-L-ornithine (cyclic): step 1/1. It functions in the pathway amino-acid biosynthesis; L-arginine biosynthesis; N(2)-acetyl-L-ornithine from L-glutamate: step 1/4. Catalyzes two activities which are involved in the cyclic version of arginine biosynthesis: the synthesis of N-acetylglutamate from glutamate and acetyl-CoA as the acetyl donor, and of ornithine by transacetylation between N(2)-acetylornithine and glutamate. The sequence is that of Arginine biosynthesis bifunctional protein ArgJ from Bacillus cereus (strain ZK / E33L).